We begin with the raw amino-acid sequence, 156 residues long: Snaclec A5 (156 aa).

An N-terminal signal peptide occupies residues 1 to 23 (MGRSISVSFGLLVVFLSLSGTGA). Cystine bridges form between Cys27–Cys38, Cys55–Cys154, and Cys129–Cys146. In terms of domain architecture, C-type lectin spans 34-155 (HEGHCYKVFN…CGKPYRFTCE (122 aa)).

It belongs to the snaclec family. In terms of assembly, heterodimer; disulfide-linked. In terms of tissue distribution, expressed by the venom gland.

The protein resides in the secreted. Interferes with one step of hemostasis (modulation of platelet aggregation, or coagulation cascade, for example). This Macrovipera lebetinus (Levantine viper) protein is Snaclec A5.